Here is a 546-residue protein sequence, read N- to C-terminus: Metal transporter Nramp6.2 (546 aa).

Helical transmembrane passes span 50 to 70 (FLPY…PGNL), 83 to 103 (ELLW…SLAA), 128 to 150 (SLWL…GTAF), 154 to 176 (ILFH…LLLG), 187 to 207 (LLIS…LSYV), 233 to 253 (IALL…ALVL), 270 to 290 (YFLI…VSII), and 333 to 353 (IYAI…TYAG). A glycan (N-linked (GlcNAc...) asparagine) is linked at Asn371. A run of 4 helical transmembrane segments spans residues 374–394 (TRCI…SSGA), 397–417 (LIII…IPLL), 433–453 (IYII…NVYY), and 473–493 (VIIG…IIYL).

It belongs to the NRAMP (TC 2.A.55) family.

The protein resides in the membrane. In terms of biological role, probable divalent metal transporter. The protein is Metal transporter Nramp6.2 of Populus trichocarpa (Western balsam poplar).